Consider the following 503-residue polypeptide: GMP synthase [glutamine-hydrolyzing] (503 aa).

Residues 1–189 enclose the Glutamine amidotransferase type-1 domain; sequence MVLVLDFGSQ…FLELAGVKRD (189 aa). The active-site Nucleophile is the Cys-78. Residues His-164 and Glu-166 contribute to the active site. The region spanning 190–378 is the GMPS ATP-PPase domain; the sequence is WTPEHVLEEL…LGLPDTLRLR (189 aa). 217-223 contacts ATP; the sequence is SGGVDSS.

Homodimer.

It catalyses the reaction XMP + L-glutamine + ATP + H2O = GMP + L-glutamate + AMP + diphosphate + 2 H(+). It functions in the pathway purine metabolism; GMP biosynthesis; GMP from XMP (L-Gln route): step 1/1. Its function is as follows. Catalyzes the synthesis of GMP from XMP. The protein is GMP synthase [glutamine-hydrolyzing] of Thermus thermophilus (strain ATCC 27634 / DSM 579 / HB8).